The following is a 297-amino-acid chain: Transcription factor PCF8 (297 aa).

The interval 1-22 (MEEVVGGGKERKRPRGALVGVG) is disordered. A TCP domain is found at 46 to 104 (GKDRHSKVVTSRGLRDRRVRLSVPTAIAFYDIQDRLGVDQPSKAIEWLIRAAAAAIDAL). Disordered stretches follow at residues 116 to 136 (AASS…SETS) and 273 to 297 (AAPA…ERKT). Residues 282–297 (GERRLQLWDFKEERKT) are compositionally biased toward basic and acidic residues.

Forms homodimers and heterodimers.

It is found in the nucleus. Its function is as follows. Transcription activator. Binds the promoter core sequence 5'-GGNCC-3'. The polypeptide is Transcription factor PCF8 (PCF8) (Oryza sativa subsp. indica (Rice)).